The chain runs to 60 residues: MDHRLLEIIACPVCNGKLYYSQDKQELICKLDNLAFPLRDGIPVLLETEARSLAAEESRP.

It belongs to the UPF0434 family.

This chain is UPF0434 protein Ent638_1436, found in Enterobacter sp. (strain 638).